Consider the following 180-residue polypeptide: Putative manganese efflux pump MntP (180 aa).

The next 6 helical transmembrane spans lie at 6–26 (LMAL…GIGL), 34–54 (ILQI…TGWL), 67–87 (AAVI…WAAW), 102–122 (FWGL…AGFT), 131–151 (LLAA…GLVF), and 160–180 (GERA…KLFF).

This sequence belongs to the MntP (TC 9.B.29) family.

The protein resides in the cell membrane. Probably functions as a manganese efflux pump. This chain is Putative manganese efflux pump MntP, found in Pelotomaculum thermopropionicum (strain DSM 13744 / JCM 10971 / SI).